We begin with the raw amino-acid sequence, 786 residues long: Wall-associated receptor kinase-like 17 (786 aa).

The N-terminal stretch at 1–30 (MSYKNTNNSHLILFKLLLLLILYSADLTAS) is a signal peptide. The Extracellular segment spans residues 31–369 (SSCRSECGGC…YRCVGDKTKA (339 aa)). Asn-69, Asn-122, Asn-160, Asn-165, and Asn-274 each carry an N-linked (GlcNAc...) asparagine glycan. Residues 301 to 362 (CICDYTMSII…CVNFEGGYRC (62 aa)) form an atypical EGF-like region. Disulfide bonds link Cys-303/Cys-318, Cys-340/Cys-353, and Cys-347/Cys-362. Residues 370-390 (IMIGAGTGFGVLVLVGGVWWL) traverse the membrane as a helical segment. Over 391 to 786 (RKFLVKRRMA…VEPLNPLLTW (396 aa)) the chain is Cytoplasmic. Thr-433 is modified (phosphothreonine). Residues 444–719 (FSENRVLGHG…REVFTELERI (276 aa)) form the Protein kinase domain. ATP is bound by residues 450–458 (LGHGGQGTV) and Lys-472. Tyr-517 carries the phosphotyrosine modification. The Proton acceptor role is filled by Asp-570. A phosphothreonine mark is found at Thr-604 and Thr-609. Tyr-617 carries the phosphotyrosine modification. Over residues 766-775 (SSIVASPPSS) the composition is skewed to low complexity. A disordered region spans residues 766–786 (SSIVASPPSSDVEPLNPLLTW).

Belongs to the protein kinase superfamily. Ser/Thr protein kinase family.

The protein resides in the membrane. It carries out the reaction L-seryl-[protein] + ATP = O-phospho-L-seryl-[protein] + ADP + H(+). The catalysed reaction is L-threonyl-[protein] + ATP = O-phospho-L-threonyl-[protein] + ADP + H(+). In terms of biological role, serine/threonine-protein kinase that may function as a signaling receptor of extracellular matrix component. The sequence is that of Wall-associated receptor kinase-like 17 (WAKL17) from Arabidopsis thaliana (Mouse-ear cress).